Here is a 59-residue protein sequence, read N- to C-terminus: UPF0391 membrane protein GbCGDNIH1_2123 (59 aa).

Transmembrane regions (helical) follow at residues Leu-6 to Ser-26 and Ile-35 to Gly-55.

Belongs to the UPF0391 family.

It localises to the cell membrane. This chain is UPF0391 membrane protein GbCGDNIH1_2123, found in Granulibacter bethesdensis (strain ATCC BAA-1260 / CGDNIH1).